The sequence spans 541 residues: Glucose-6-phosphate isomerase (541 aa).

The Proton donor role is filled by Glu-346. Catalysis depends on residues His-377 and Lys-506.

The protein belongs to the GPI family.

It localises to the cytoplasm. It catalyses the reaction alpha-D-glucose 6-phosphate = beta-D-fructose 6-phosphate. It functions in the pathway carbohydrate biosynthesis; gluconeogenesis. The protein operates within carbohydrate degradation; glycolysis; D-glyceraldehyde 3-phosphate and glycerone phosphate from D-glucose: step 2/4. Its function is as follows. Catalyzes the reversible isomerization of glucose-6-phosphate to fructose-6-phosphate. The sequence is that of Glucose-6-phosphate isomerase from Rhizobium etli (strain CIAT 652).